Here is a 233-residue protein sequence, read N- to C-terminus: 2,3,4,5-tetrahydropyridine-2,6-dicarboxylate N-acetyltransferase (233 aa).

Belongs to the transferase hexapeptide repeat family. DapH subfamily.

It catalyses the reaction (S)-2,3,4,5-tetrahydrodipicolinate + acetyl-CoA + H2O = L-2-acetamido-6-oxoheptanedioate + CoA. Its pathway is amino-acid biosynthesis; L-lysine biosynthesis via DAP pathway; LL-2,6-diaminopimelate from (S)-tetrahydrodipicolinate (acetylase route): step 1/3. In terms of biological role, catalyzes the transfer of an acetyl group from acetyl-CoA to tetrahydrodipicolinate. This chain is 2,3,4,5-tetrahydropyridine-2,6-dicarboxylate N-acetyltransferase, found in Oenococcus oeni (strain ATCC BAA-331 / PSU-1).